A 406-amino-acid chain; its full sequence is Probable 2,3-bisphosphoglycerate-independent phosphoglycerate mutase (406 aa).

This sequence belongs to the BPG-independent phosphoglycerate mutase family. A-PGAM subfamily.

The enzyme catalyses (2R)-2-phosphoglycerate = (2R)-3-phosphoglycerate. Its pathway is carbohydrate degradation; glycolysis; pyruvate from D-glyceraldehyde 3-phosphate: step 3/5. In terms of biological role, catalyzes the interconversion of 2-phosphoglycerate and 3-phosphoglycerate. This chain is Probable 2,3-bisphosphoglycerate-independent phosphoglycerate mutase, found in Thermus thermophilus (strain ATCC 27634 / DSM 579 / HB8).